Reading from the N-terminus, the 200-residue chain is Probable GTP-binding protein EngB (200 aa).

An EngB-type G domain is found at G22–E199. GTP-binding positions include G30–S37, G57–T61, D78–G81, T145–D148, and F178–S180. Residues S37 and T59 each coordinate Mg(2+).

It belongs to the TRAFAC class TrmE-Era-EngA-EngB-Septin-like GTPase superfamily. EngB GTPase family. The cofactor is Mg(2+).

Functionally, necessary for normal cell division and for the maintenance of normal septation. This Lactobacillus delbrueckii subsp. bulgaricus (strain ATCC 11842 / DSM 20081 / BCRC 10696 / JCM 1002 / NBRC 13953 / NCIMB 11778 / NCTC 12712 / WDCM 00102 / Lb 14) protein is Probable GTP-binding protein EngB.